A 135-amino-acid chain; its full sequence is uncharacterized protein (135 aa).

The next 4 helical transmembrane spans lie at 4 to 24 (IIICIKLGVVFLGTLFTWIFG), 26 to 46 (WDMPIVTLLVFIFLDYLTGVI), 68 to 88 (LILVVLLVAVMLDRLLDNGAW), and 93 to 113 (LIAYFYIMNEGISILENCAAL).

Belongs to the bacteriophage holin family. Cp-1 holin subfamily.

It is found in the cell membrane. This is an uncharacterized protein from Clostridium perfringens (strain 13 / Type A).